Here is a 181-residue protein sequence, read N- to C-terminus: Succinate dehydrogenase [ubiquinone] cytochrome b small subunit, mitochondrial (181 aa).

The transit peptide at 1-31 directs the protein to the mitochondrion; that stretch reads MMLPRSMKFMTGRRIFHTATVRAFQSTAKKS. The Mitochondrial matrix portion of the chain corresponds to 32-66; the sequence is LTIPFLPVLPQKPGGVRGTPNDAYVPPPENKLEGS. A helical transmembrane segment spans residues 67-88; it reads YHWYMEKIFALSVVPLATTAML. Residues 89-98 are Mitochondrial intermembrane-facing; the sequence is TTGPLSTAAD. A helical membrane pass occupies residues 99–118; that stretch reads SFFSVMLLGYCYMEFNSCIT. Cys-109 is a binding site for heme. Residues 119-127 are Mitochondrial matrix-facing; sequence DYISERVYG. Tyr-120 contacts a ubiquinone. Residues 128-148 traverse the membrane as a helical segment; the sequence is VWHKYAMYMLGLGSAVSLFGI. The Mitochondrial intermembrane segment spans residues 149-181; it reads YKLETENDGVVGLVKSLWDSSEKDNSQKIEAKK.

This sequence belongs to the CybS family. Forms part of complex II containing four subunits: a flavoprotein (FP), an iron-sulfur protein (IP) and a cytochrome b composed of a large and a small subunit.

It localises to the mitochondrion inner membrane. It functions in the pathway carbohydrate metabolism; tricarboxylic acid cycle. Its function is as follows. Membrane-anchoring subunit of succinate dehydrogenase (SDH) that is involved in system II of the mitochondrial electron transport chain and is responsible for transferring electrons from succinate to ubiquinone (coenzyme Q). SDH3 and SDH4 form the membrane dimer that anchors the catalytic dimer formed by SDH1 and SDH2 to the matrix surface of the mitochondrial inner membrane. Electrons originating from the catalytic dimer enter the membrane dimer for ubiquinone reduction. The chain is Succinate dehydrogenase [ubiquinone] cytochrome b small subunit, mitochondrial (SDH4) from Saccharomyces cerevisiae (strain ATCC 204508 / S288c) (Baker's yeast).